Reading from the N-terminus, the 347-residue chain is Ribosomal RNA small subunit methyltransferase C (347 aa).

The protein belongs to the methyltransferase superfamily. RsmC family. In terms of assembly, monomer.

It is found in the cytoplasm. The enzyme catalyses guanosine(1207) in 16S rRNA + S-adenosyl-L-methionine = N(2)-methylguanosine(1207) in 16S rRNA + S-adenosyl-L-homocysteine + H(+). Specifically methylates the guanine in position 1207 of 16S rRNA in the 30S particle. The chain is Ribosomal RNA small subunit methyltransferase C from Shewanella baltica (strain OS185).